The following is a 296-amino-acid chain: ATP phosphoribosyltransferase (296 aa).

Belongs to the ATP phosphoribosyltransferase family.

Its subcellular location is the cytoplasm. It carries out the reaction 1-(5-phospho-beta-D-ribosyl)-ATP + diphosphate = 5-phospho-alpha-D-ribose 1-diphosphate + ATP. It functions in the pathway amino-acid biosynthesis; L-histidine biosynthesis; L-histidine from 5-phospho-alpha-D-ribose 1-diphosphate: step 1/9. In terms of biological role, catalyzes the condensation of ATP and 5-phosphoribose 1-diphosphate to form N'-(5'-phosphoribosyl)-ATP (PR-ATP). Has a crucial role in the pathway because the rate of histidine biosynthesis seems to be controlled primarily by regulation of the enzymatic activity. In Yarrowia lipolytica (strain CLIB 122 / E 150) (Yeast), this protein is ATP phosphoribosyltransferase (HIS1).